We begin with the raw amino-acid sequence, 132 residues long: Small ribosomal subunit protein uS8 (132 aa).

It belongs to the universal ribosomal protein uS8 family. As to quaternary structure, part of the 30S ribosomal subunit. Contacts proteins S5 and S12.

In terms of biological role, one of the primary rRNA binding proteins, it binds directly to 16S rRNA central domain where it helps coordinate assembly of the platform of the 30S subunit. This is Small ribosomal subunit protein uS8 from Anoxybacillus flavithermus (strain DSM 21510 / WK1).